Here is a 380-residue protein sequence, read N- to C-terminus: Chaperone protein DnaJ (380 aa).

The region spanning 5–69 (DYYEILGVSK…QKRAHYDQFG (65 aa)) is the J domain. The CR-type zinc-finger motif lies at 135-217 (GKETDIEIPS…CGGTGRVKRR (83 aa)). Cys-148, Cys-151, Cys-165, Cys-168, Cys-191, Cys-194, Cys-205, and Cys-208 together coordinate Zn(2+). 4 CXXCXGXG motif repeats span residues 148–155 (CNTCHGTG), 165–172 (CPHCHGAG), 191–198 (CPYCGGTG), and 205–212 (CTTCGGTG).

Belongs to the DnaJ family. In terms of assembly, homodimer. Zn(2+) serves as cofactor.

Its subcellular location is the cytoplasm. Its function is as follows. Participates actively in the response to hyperosmotic and heat shock by preventing the aggregation of stress-denatured proteins and by disaggregating proteins, also in an autonomous, DnaK-independent fashion. Unfolded proteins bind initially to DnaJ; upon interaction with the DnaJ-bound protein, DnaK hydrolyzes its bound ATP, resulting in the formation of a stable complex. GrpE releases ADP from DnaK; ATP binding to DnaK triggers the release of the substrate protein, thus completing the reaction cycle. Several rounds of ATP-dependent interactions between DnaJ, DnaK and GrpE are required for fully efficient folding. Also involved, together with DnaK and GrpE, in the DNA replication of plasmids through activation of initiation proteins. The sequence is that of Chaperone protein DnaJ from Geobacillus stearothermophilus (Bacillus stearothermophilus).